A 367-amino-acid chain; its full sequence is Peptide chain release factor 1 (367 aa).

The residue at position 238 (Gln238) is an N5-methylglutamine.

This sequence belongs to the prokaryotic/mitochondrial release factor family. In terms of processing, methylated by PrmC. Methylation increases the termination efficiency of RF1.

The protein localises to the cytoplasm. Its function is as follows. Peptide chain release factor 1 directs the termination of translation in response to the peptide chain termination codons UAG and UAA. The chain is Peptide chain release factor 1 from Dictyoglomus thermophilum (strain ATCC 35947 / DSM 3960 / H-6-12).